A 156-amino-acid polypeptide reads, in one-letter code: MPRRREVPKRYVLPDPKYNSKLAAKFINNLMRRGKKSLAEHVLYGALDLIEQRSKQDPLDLFHKAMENVRPVVEVKSRRVGGATYQVPVEVRHERRDALAMRWIINYAKQRTEKTMIQRLAGELQDAAQNRGGSVKKREDTHRMAEANKAFAHYRW.

This sequence belongs to the universal ribosomal protein uS7 family. As to quaternary structure, part of the 30S ribosomal subunit. Contacts proteins S9 and S11.

One of the primary rRNA binding proteins, it binds directly to 16S rRNA where it nucleates assembly of the head domain of the 30S subunit. Is located at the subunit interface close to the decoding center, probably blocks exit of the E-site tRNA. This is Small ribosomal subunit protein uS7 from Syntrophobacter fumaroxidans (strain DSM 10017 / MPOB).